A 336-amino-acid chain; its full sequence is Ornithine carbamoyltransferase, catabolic (336 aa).

Residues Ser57–Thr60, Gln84, Arg108, and His136–Gln139 each bind carbamoyl phosphate. L-ornithine-binding positions include Asn169, Asp233, and Ser237–Met238. Residues Cys275–Leu276 and Arg322 each bind carbamoyl phosphate.

It belongs to the aspartate/ornithine carbamoyltransferase superfamily. OTCase family.

Its subcellular location is the cytoplasm. The catalysed reaction is carbamoyl phosphate + L-ornithine = L-citrulline + phosphate + H(+). It functions in the pathway amino-acid degradation; L-arginine degradation via ADI pathway; carbamoyl phosphate from L-arginine: step 2/2. In terms of biological role, reversibly catalyzes the transfer of the carbamoyl group from carbamoyl phosphate (CP) to the N(epsilon) atom of ornithine (ORN) to produce L-citrulline. This Chromobacterium violaceum (strain ATCC 12472 / DSM 30191 / JCM 1249 / CCUG 213 / NBRC 12614 / NCIMB 9131 / NCTC 9757 / MK) protein is Ornithine carbamoyltransferase, catabolic.